Reading from the N-terminus, the 72-residue chain is Translation initiation factor IF-1 (72 aa).

Residues 1 to 72 (MAKEDCIEME…TKGRIKFRSK (72 aa)) enclose the S1-like domain.

Belongs to the IF-1 family. Component of the 30S ribosomal translation pre-initiation complex which assembles on the 30S ribosome in the order IF-2 and IF-3, IF-1 and N-formylmethionyl-tRNA(fMet); mRNA recruitment can occur at any time during PIC assembly.

The protein resides in the cytoplasm. In terms of biological role, one of the essential components for the initiation of protein synthesis. Stabilizes the binding of IF-2 and IF-3 on the 30S subunit to which N-formylmethionyl-tRNA(fMet) subsequently binds. Helps modulate mRNA selection, yielding the 30S pre-initiation complex (PIC). Upon addition of the 50S ribosomal subunit IF-1, IF-2 and IF-3 are released leaving the mature 70S translation initiation complex. In Francisella tularensis subsp. tularensis (strain WY96-3418), this protein is Translation initiation factor IF-1.